The chain runs to 872 residues: Alanine--tRNA ligase (872 aa).

Positions 567, 571, 669, and 673 each coordinate Zn(2+).

It belongs to the class-II aminoacyl-tRNA synthetase family. Requires Zn(2+) as cofactor.

The protein localises to the cytoplasm. It carries out the reaction tRNA(Ala) + L-alanine + ATP = L-alanyl-tRNA(Ala) + AMP + diphosphate. Its function is as follows. Catalyzes the attachment of alanine to tRNA(Ala) in a two-step reaction: alanine is first activated by ATP to form Ala-AMP and then transferred to the acceptor end of tRNA(Ala). Also edits incorrectly charged Ser-tRNA(Ala) and Gly-tRNA(Ala) via its editing domain. The protein is Alanine--tRNA ligase of Streptococcus mutans serotype c (strain ATCC 700610 / UA159).